A 374-amino-acid chain; its full sequence is Fanconi anemia group F protein (374 aa).

In terms of assembly, belongs to the multisubunit FA complex composed of FANCA, FANCB, FANCC, FANCE, FANCF, FANCG, FANCL/PHF9 and FANCM. The complex is not found in FA patients. In complex with FANCA, FANCG and FANCL, but not with FANCC, nor FANCE, interacts with HES1; this interaction may be essential for the stability and nuclear localization of FA core complex proteins.

It is found in the nucleus. In terms of biological role, DNA repair protein that may operate in a postreplication repair or a cell cycle checkpoint function. May be implicated in interstrand DNA cross-link repair and in the maintenance of normal chromosome stability. The polypeptide is Fanconi anemia group F protein (FANCF) (Homo sapiens (Human)).